Reading from the N-terminus, the 647-residue chain is uncharacterized protein (647 aa).

A run of 5 helical transmembrane segments spans residues 14–38 (LFPIFTFVLINLIILSLSRLGLAVW), 61–78 (VVALCYLFGVPALLTTLF), 90–110 (LWLTFGSVFIIFMEIATPAFI), 140–158 (LSAVIFSLVFTILAAVIYW), and 178–195 (VIALLVIVVSFLGARSSF).

The protein resides in the cell membrane. This is an uncharacterized protein from Haemophilus influenzae (strain ATCC 51907 / DSM 11121 / KW20 / Rd).